The primary structure comprises 82 residues: RNA-binding protein BPUM_0095 (82 aa).

Belongs to the eukaryotic ribosomal protein eL8 family.

This Bacillus pumilus (strain SAFR-032) protein is RNA-binding protein BPUM_0095.